The sequence spans 211 residues: Methylthioribulose-1-phosphate dehydratase (211 aa).

His97 and His99 together coordinate Zn(2+).

This sequence belongs to the aldolase class II family. MtnB subfamily. In terms of assembly, homotetramer. Requires Zn(2+) as cofactor.

It catalyses the reaction 5-(methylsulfanyl)-D-ribulose 1-phosphate = 5-methylsulfanyl-2,3-dioxopentyl phosphate + H2O. It participates in amino-acid biosynthesis; L-methionine biosynthesis via salvage pathway; L-methionine from S-methyl-5-thio-alpha-D-ribose 1-phosphate: step 2/6. Functionally, catalyzes the dehydration of methylthioribulose-1-phosphate (MTRu-1-P) into 2,3-diketo-5-methylthiopentyl-1-phosphate (DK-MTP-1-P). This is Methylthioribulose-1-phosphate dehydratase from Geobacillus thermodenitrificans (strain NG80-2).